Reading from the N-terminus, the 416-residue chain is CinA-like protein (416 aa).

This sequence belongs to the CinA family.

This chain is CinA-like protein, found in Syntrophomonas wolfei subsp. wolfei (strain DSM 2245B / Goettingen).